The chain runs to 987 residues: MSHIRVAFAPLDTNPSTCGLETFATQIETLSQMMTAEEMKAELYDCVRRILREQKFDQIRENEAMLRLYKVMGRSSTNLKGRGIYEQLFKKDHFTGSLKFYLQWAEECGKDQMLEEFKDVLKLARDRLSERIEMTAIESGFRDLVDEYFNGESGDMFTRPDETMDLFRFNAGSKKKRRSSVCFLQHNVPINNSGKAAFGPKTKTDLRQACIDRPNYHGISIEEFRFAKWKDTFGEDVDDDYRKRKDSGVVFVKHQVIDTDRQAREEVENRFNANLNPRRRHLSPVSEKTVDDEEEKRSRIYSPLVATKDAHRPALRSKIENPPATVTLSSDTKSASEKDVSDSDDADDDERLKIMTAGRKDGNPPDRSTSISSNYSTASARTSKSGAGLDLMAENKCLEAHAMFSDTVHLASEKTMVLGDDSVFVPERSLATTQIVTDFSVLCDPDPTMTITQERPKKVSNGLNVVYDEAAEPEESQKVEESEVQPEIVLVSPVTQTSPATMFNDIYDDEIEFGFFKPSRGNFVTSTPAQGVHLVNIDEYFGNKEEESTHEQEAPVFVAPTSSTFSKLTRRKSLAANQAVQPSVTESSKPERSDPKDSSIDCLTANLGRRLSIGADEIPNLTENNESEITGCKIRRRSEIIKQGDINPWDETLRKKLMCLVRPPQNMHEFQERAPKIQALRDCEVSGEKLHIQTLIGQGGYAKVYRAVTDDQRTVAVKYEVPSCSWEVYICDQMRNRLKDRGLELMAKCCIMEVMDAYVYSTASLLVNQYHEYGTLLEYANNMKDPNWHITCFLITQMARVVKEVHASKIIHGDIKPDNFMITRKIDDKWGKDALMSNDSFVIKIIDWGRAIDMMPLKNQRFKGRAGTEAFDCPEMVDGRSWTYQADYFGFAATMAVVVAGKYAQLTGASVGDYSLNVDIKRRNILRDACYDVINRFLNIPSCDSLPDWNILIKSFSEIWNEKFEASGWRQAVSKFNEACDLAANQK.

2 disordered regions span residues 278 to 385 and 574 to 599; these read RRRH…TSKS and LAAN…KDSS. Residues 350-364 are compositionally biased toward basic and acidic residues; that stretch reads ERLKIMTAGRKDGNP. Residues 368–380 are compositionally biased toward low complexity; sequence STSISSNYSTASA. A compositionally biased stretch (polar residues) spans 575–587; sequence AANQAVQPSVTES. A compositionally biased stretch (basic and acidic residues) spans 588 to 599; it reads SKPERSDPKDSS. The region spanning 690 to 987 is the Protein kinase domain; the sequence is LHIQTLIGQG…EACDLAANQK (298 aa). ATP contacts are provided by residues 696 to 704 and K718; that span reads IGQGGYAKV. Catalysis depends on D814, which acts as the Proton acceptor.

The protein belongs to the protein kinase superfamily. Ser/Thr protein kinase family. BUB1 subfamily. Interacts (via kinase domain) with mdf-1 (via coiled coil domain); the interaction recruits mdf-1 to unattached kinetochores during mitosis and between homologous chromosomes in early anaphase of meiosis I. May interact with bub-3; for localization at the kinetochore and the onset of anaphase.

Its subcellular location is the cytoplasm. The protein localises to the cell cortex. The protein resides in the nucleus. It localises to the chromosome. It is found in the centromere. Its subcellular location is the kinetochore. The catalysed reaction is L-seryl-[protein] + ATP = O-phospho-L-seryl-[protein] + ADP + H(+). The enzyme catalyses L-threonyl-[protein] + ATP = O-phospho-L-threonyl-[protein] + ADP + H(+). In terms of biological role, serine/threonine-protein kinase essential for spindle-assembly checkpoint signaling. Plays a key role in the recruitment of the checkpoint proteins bub-3, mdf-1 and mdf-2 to unattached kinetochores. mdf-1 recruitment is independent of bub-1 kinase activity. Has a role in the correct kinetochore localization of the spindly-like protein spdl-1. In addition, during meiotic anaphase I, controls the recruitment of hcp-1/2 and klp-19 to the ring-shaped domain formed between chromosomes. Involved in chromosome alignment, chromosome homolog segregation and spindle assembly. In association with bub-3 at the kinetochore region of chromosomes, promotes the onset on anaphase independently from spindle checkpoint signaling and promotes the formation of stable end-on bipolar attachments of chromosomes. Plays a role in nuclear envelope breakdown. Required maternally during embryogenesis and in the zygote for the postembryonic development of several tissues including ventral cord neurons, gonad, intestine and seam cells. The chain is Mitotic checkpoint serine/threonine-protein kinase bub-1 from Caenorhabditis elegans.